Here is a 206-residue protein sequence, read N- to C-terminus: dTTP/UTP pyrophosphatase (206 aa).

The Proton acceptor role is filled by Asp-79.

Belongs to the Maf family. YhdE subfamily. Requires a divalent metal cation as cofactor.

Its subcellular location is the cytoplasm. The enzyme catalyses dTTP + H2O = dTMP + diphosphate + H(+). It carries out the reaction UTP + H2O = UMP + diphosphate + H(+). In terms of biological role, nucleoside triphosphate pyrophosphatase that hydrolyzes dTTP and UTP. May have a dual role in cell division arrest and in preventing the incorporation of modified nucleotides into cellular nucleic acids. The chain is dTTP/UTP pyrophosphatase from Rhizobium johnstonii (strain DSM 114642 / LMG 32736 / 3841) (Rhizobium leguminosarum bv. viciae).